The primary structure comprises 484 residues: Cobyric acid synthase (484 aa).

Residues 251-438 (ALKIAVPMLP…LHGLFGSDAY (188 aa)) enclose the GATase cobBQ-type domain. Residue Cys333 is the Nucleophile of the active site. Residue His430 is part of the active site.

The protein belongs to the CobB/CobQ family. CobQ subfamily.

The protein operates within cofactor biosynthesis; adenosylcobalamin biosynthesis. In terms of biological role, catalyzes amidations at positions B, D, E, and G on adenosylcobyrinic A,C-diamide. NH(2) groups are provided by glutamine, and one molecule of ATP is hydrogenolyzed for each amidation. The polypeptide is Cobyric acid synthase (Rhizobium etli (strain ATCC 51251 / DSM 11541 / JCM 21823 / NBRC 15573 / CFN 42)).